We begin with the raw amino-acid sequence, 37 residues long: Large ribosomal subunit protein bL36 (37 aa).

Belongs to the bacterial ribosomal protein bL36 family.

This Staphylococcus saprophyticus subsp. saprophyticus (strain ATCC 15305 / DSM 20229 / NCIMB 8711 / NCTC 7292 / S-41) protein is Large ribosomal subunit protein bL36.